The sequence spans 55 residues: Large ribosomal subunit protein bL33B (55 aa).

This sequence belongs to the bacterial ribosomal protein bL33 family.

The sequence is that of Large ribosomal subunit protein bL33B from Rhodococcus jostii (strain RHA1).